The primary structure comprises 325 residues: Endo-1,4-beta-xylanase 2 (325 aa).

The signal sequence occupies residues 1–18 (MLYTSIFAAAMAASGAMA). A GH10 domain is found at 26–325 (ASNCTTLDSF…KAAVKAIMAI (300 aa)). An N-linked (GlcNAc...) asparagine glycan is attached at Asn28. Glu157 (proton donor) is an active-site residue. Glu262 serves as the catalytic Nucleophile. Cys280 and Cys286 are joined by a disulfide.

This sequence belongs to the glycosyl hydrolase 10 (cellulase F) family.

It localises to the secreted. It catalyses the reaction Endohydrolysis of (1-&gt;4)-beta-D-xylosidic linkages in xylans.. The protein operates within glycan degradation; xylan degradation. Functionally, endo-1,4-beta-xylanase involved in the hydrolysis of xylan, a major structural heterogeneous polysaccharide found in plant biomass representing the second most abundant polysaccharide in the biosphere, after cellulose. The protein is Endo-1,4-beta-xylanase 2 (xyl2) of Claviceps purpurea (Ergot fungus).